Here is a 765-residue protein sequence, read N- to C-terminus: 5-methyltetrahydropteroyltriglutamate--homocysteine methyltransferase 2 (765 aa).

Residues K18 and N116 each coordinate 5-methyltetrahydropteroyltri-L-glutamate. Residues 437–439 (IGS) and E490 each bind L-homocysteine. L-methionine-binding positions include 437-439 (IGS) and E490. Residues D495, Y518, 521-522 (RC), and W567 each bind 5-methyltetrahydropteroyltri-L-glutamate. Residue D605 participates in L-homocysteine binding. Residue D605 coordinates L-methionine. Zn(2+) is bound by residues H647, C649, H658, D662, and E671. H701 functions as the Proton donor in the catalytic mechanism. Position 733 (C733) interacts with Zn(2+).

This sequence belongs to the vitamin-B12 independent methionine synthase family. The cofactor is Zn(2+). Expressed in leaves, stems and siliques.

It localises to the cytoplasm. It is found in the cytosol. It carries out the reaction 5-methyltetrahydropteroyltri-L-glutamate + L-homocysteine = tetrahydropteroyltri-L-glutamate + L-methionine. It participates in amino-acid biosynthesis; L-methionine biosynthesis via de novo pathway; L-methionine from L-homocysteine (MetE route): step 1/1. Functionally, catalyzes the transfer of a methyl group from 5-methyltetrahydrofolate to homocysteine resulting in methionine formation. The chain is 5-methyltetrahydropteroyltriglutamate--homocysteine methyltransferase 2 (MS2) from Arabidopsis thaliana (Mouse-ear cress).